The following is a 446-amino-acid chain: Citrate/sodium symporter (446 aa).

The Cytoplasmic segment spans residues 1–27; that stretch reads MTNMSQPPATEKKGVSDLLGFKIFGMP. A helical membrane pass occupies residues 28-44; sequence LPLYAFALITLLLSHFY. Over 45-50 the chain is Periplasmic; the sequence is NALPTD. A helical membrane pass occupies residues 51–71; that stretch reads IVGGFAIMFIIGAIFGEIGKR. Topologically, residues 72 to 80 are cytoplasmic; sequence LPIFNKYIG. Residues 81 to 95 traverse the membrane as a helical segment; it reads GAPVMIFLVAAYFVY. The Periplasmic portion of the chain corresponds to 96–115; sequence AGIFTQKEIDAISNVMDKSN. The helical transmembrane segment at 116–130 threads the bilayer; sequence FLNLFIAVLITGAIL. Residues 131 to 136 lie on the Cytoplasmic side of the membrane; the sequence is SVNRRL. The helical transmembrane segment at 137–166 threads the bilayer; sequence LLKSLLGYIPTILMGIVGASIFGIAIGLVF. Residues 167–181 are Periplasmic-facing; it reads GIPVDRIMMLYVLPI. Residues Ile-181 and Gly-183 each contribute to the Na(+) site. The segment at residues 182-189 is an intramembrane region (helical); that stretch reads MGGGNGAG. Residues Asn-186 and Gly-187 each coordinate citrate. The Periplasmic portion of the chain corresponds to 190-212; sequence AVPLSEIYHSVTGRSREEYYSTA. A helical transmembrane segment spans residues 213-233; that stretch reads IAILTIANIFAIVFAAVLDII. Over 234–264 the chain is Cytoplasmic; the sequence is GKKHTWLSGEGELVRKASFKVEEDEKTGQIT. A helical transmembrane segment spans residues 265 to 287; the sequence is HRETAVGLVLSTTCFLLAYVVAK. Topologically, residues 288–299 are periplasmic; the sequence is KILPSIGGVAIH. A helical transmembrane segment spans residues 300–315; the sequence is YFAWMVLIVAALNASG. At 316–327 the chain is on the cytoplasmic side; sequence LCSPEIKAGAKR. A helical membrane pass occupies residues 328–351; sequence LSDFFSKQLLWVLMVGVGVCYTDL. The Periplasmic segment spans residues 352-359; sequence QEIINAIT. A helical membrane pass occupies residues 360–381; it reads FANVVIAAIIVIGAVLGAAIGG. At 382–398 the chain is on the cytoplasmic side; the sequence is WLMGFFPIESAITAGLC. Na(+) is bound by residues Met-399 and Asn-401. The segment at residues 399-406 is an intramembrane region (helical); sequence MANRGGSG. Arg-402, Gly-404, and Ser-405 together coordinate citrate. The Cytoplasmic segment spans residues 407–416; that stretch reads DLEVLSACNR. A helical membrane pass occupies residues 417–438; that stretch reads MNLISYAQISSRLGGGIVLVIA. Arg-428 provides a ligand contact to citrate. Residues 439–446 lie on the Periplasmic side of the membrane; sequence SIVFGMMI.

This sequence belongs to the 2-hydroxycarboxylate transporter (2-HCT) (TC 2.A.24) family. Homodimer.

Its subcellular location is the cell inner membrane. It carries out the reaction citrate(out) + 2 Na(+)(out) = citrate(in) + 2 Na(+)(in). With respect to regulation, in the absence of Na(+), transport is inhibited by the thiol reagents N-ethylmaleimide (NEM) and the methanethiosulfonate (MTS) derivatives MTSEA, MTSET and MTSES. However, inactivation by NEM, MTSES and MTSET is prevented by the presence of Na(+). In the absence of Na(+), the substrate citrate has no effect on the inactivation by permeable or impermeable thiol reagents. In contrast, when subsaturating concentrations of Na(+) are present, citrate significantly reduces inactivation, suggesting ordered binding of the substrate and co-ion; citrate is bound after Na(+). The membrane impermeable bulky maleimide AmdiS does not inactivate the transporter in right-side-out membrane vesicles. The apparent affinity for Na(+) decreases with increasing proton concentration. Protons cannot replace Na(+) in the translocation step but the decrease in apparent affinity for Na(+) towards lower pH suggests that protons can compete with Na(+) for the cation-binding sites. Functionally, secondary active transporter that catalyzes the uptake of citrate across the membrane with the concomitant uptake of sodium. There are conflicting data regarding exact substrate stoichiometry: the sodium/citrate stoichiometry was predicted to be 1, but the latest studies suggest that CitS transports citrate in symport with 2 sodium ions. Transports citrate as a divalent citrate anion, H-citrate(2-). Shows narrow substrate specificity and is very specific, transporting only citrate and to a low extent citromalate. Symport of Na(+) is absolutely required in the range pH 5-7 because no uptake can be detected in the absence of Na(+). Lithium can replace Na(+) in the symport reaction but it takes about a 200-fold higher concentration of Li(+) over Na(+) to achieve the same rate of uptake. The polypeptide is Citrate/sodium symporter (Klebsiella pneumoniae).